Here is a 116-residue protein sequence, read N- to C-terminus: Large ribosomal subunit protein eL18 (116 aa).

Belongs to the eukaryotic ribosomal protein eL18 family. As to quaternary structure, part of the 50S ribosomal subunit. Interacts weakly with proteins L4 and L15. Has been cross-linked to L4.

Functionally, stabilizes the tertiary rRNA structure within the 23S rRNA domain (domain II) to which it binds. This chain is Large ribosomal subunit protein eL18 (rpl18e), found in Haloarcula marismortui (strain ATCC 43049 / DSM 3752 / JCM 8966 / VKM B-1809) (Halobacterium marismortui).